The primary structure comprises 217 residues: GTP-binding protein Rit2 (217 aa).

Residues 27 to 34 (GAGGVGKS), 74 to 78 (DTAGQ), and 133 to 136 (NKID) each bind GTP.

Belongs to the small GTPase superfamily. Ras family. In terms of assembly, interacts with PLXNB3. Interacts with AFDN, the C-terminal domain of RALGDS and RLF, but not with RIN1 and PIK3CA. RLF binds exclusively to the active GTP-bound form. Binds calmodulin. Interacts with POU4F1 (via N-terminus); the interaction controls POU4F1 transactivation activity on some neuronal target genes. In terms of tissue distribution, expressed in ganglion cell layer (GCL), inner plexiform layer (IPL) and inner nuclear layer (INL) of the retina. Expressed in retinal ganglion cells (RGCs). Expressed in horizontal, bipolar and amacrine cells, but not Mueller glia, of the INL (at protein level). Neuron-specific. Expressed in ganglion cell layer (GCL) and inner plexiform layer (IPL).

It is found in the nucleus. The protein resides in the cell membrane. The catalysed reaction is GTP + H2O = GDP + phosphate + H(+). Its activity is regulated as follows. Alternates between an inactive form bound to GDP and an active form bound to GTP. Its function is as follows. Binds and exchanges GTP and GDP. Binds and modulates the activation of POU4F1 as gene expression regulator. The protein is GTP-binding protein Rit2 (Rit2) of Mus musculus (Mouse).